The sequence spans 905 residues: Respiratory burst oxidase homolog protein B (905 aa).

Disordered regions lie at residues 1–46 (MADL…KTAR) and 69–134 (EVRG…VRKR). Topologically, residues 1-355 (MADLEAGMVA…MYFLEENWKR (355 aa)) are cytoplasmic. Positions 29–44 (IPNSGNLGSSNRSTKT) are enriched in polar residues. Residues 75-84 (EGGSGHGTGF) are compositionally biased toward gly residues. The span at 91-108 (SPSSKSGKLTSKLRQVTN) shows a compositional bias: polar residues. 2 EF-hand-like regions span residues 172–180 (QVDGVLLRS) and 206–217 (RGIVKQVLTKDE). EF-hand domains follow at residues 229–264 (GFDN…SASA) and 273–308 (RADE…SPSE). Ca(2+) is bound by residues D242, N244, D246, R248, and E253. The helical transmembrane segment at 356 to 376 (SWVMTLWISICIALFIWKFIQ) threads the bilayer. At 377 to 440 (YRNRAVFGIM…FNDNINFHKV (64 aa)) the chain is on the extracellular side. Residues 395–551 (GAAETLKFNM…HLFVIVYTLL (157 aa)) enclose the Ferric oxidoreductase domain. A helical membrane pass occupies residues 441–461 (IAAGVAVGVALHAGAHLTCDF). The Cytoplasmic portion of the chain corresponds to 462–496 (PRLLHASDAQYELMKPFFGEKRPPNYWWFVKGTEG). The chain crosses the membrane as a helical span at residues 497–517 (WTGVVMVVLMAIAFTLAQPWF). Topologically, residues 518–539 (RRNKLKDSNPLKKMTGFNAFWF) are extracellular. A helical membrane pass occupies residues 540 to 560 (THHLFVIVYTLLFVHGTCLYL). Over 561–568 (SRKWYKKT) the chain is Cytoplasmic. Residues 569 to 586 (TWMYLAVPVVLYVSERIL) traverse the membrane as a helical segment. In terms of domain architecture, FAD-binding FR-type spans 587–715 (RLFRSHDAVG…DGPYGAPAQD (129 aa)). Residues 587 to 717 (RLFRSHDAVG…PYGAPAQDYR (131 aa)) lie on the Extracellular side of the membrane. The helical transmembrane segment at 718-738 (EYDVLLLIGLGIGATPLISIV) threads the bilayer. At 739-905 (KDVLNHIQGE…TRFDFHKENF (167 aa)) the chain is on the cytoplasmic side.

Belongs to the RBOH (TC 5.B.1.3) family. In terms of assembly, monomer and homodimer, stabilized by swapping the EF-hand motifs. Interacts with GTP-bound RAC1.

The protein localises to the membrane. Its function is as follows. Calcium-dependent NADPH oxidase that generates superoxide. The chain is Respiratory burst oxidase homolog protein B (RBOHB) from Oryza sativa subsp. japonica (Rice).